We begin with the raw amino-acid sequence, 229 residues long: Orotidine 5'-phosphate decarboxylase (229 aa).

Substrate is bound by residues D10, K32, D59–T68, T119, R180, Q189, G209, and R210. K61 functions as the Proton donor in the catalytic mechanism.

This sequence belongs to the OMP decarboxylase family. Type 1 subfamily. In terms of assembly, homodimer.

The enzyme catalyses orotidine 5'-phosphate + H(+) = UMP + CO2. Its pathway is pyrimidine metabolism; UMP biosynthesis via de novo pathway; UMP from orotate: step 2/2. In terms of biological role, catalyzes the decarboxylation of orotidine 5'-monophosphate (OMP) to uridine 5'-monophosphate (UMP). The sequence is that of Orotidine 5'-phosphate decarboxylase from Legionella pneumophila (strain Paris).